The chain runs to 273 residues: Coiled-coil domain-containing protein 122 (273 aa).

The span at 1-17 shows a compositional bias: basic and acidic residues; it reads MSDNKERKSQGFPKEDN. Residues 1 to 39 form a disordered region; it reads MSDNKERKSQGFPKEDNQDTSSLADAVEKVAKQQQSQAS. Coiled coils occupy residues 24–116 and 179–269; these read ADAV…TAQE and NRIT…RKCI.

This chain is Coiled-coil domain-containing protein 122 (CCDC122), found in Homo sapiens (Human).